We begin with the raw amino-acid sequence, 201 residues long: 3-isopropylmalate dehydratase small subunit (201 aa).

Belongs to the LeuD family. LeuD type 1 subfamily. In terms of assembly, heterodimer of LeuC and LeuD.

It carries out the reaction (2R,3S)-3-isopropylmalate = (2S)-2-isopropylmalate. Its pathway is amino-acid biosynthesis; L-leucine biosynthesis; L-leucine from 3-methyl-2-oxobutanoate: step 2/4. Catalyzes the isomerization between 2-isopropylmalate and 3-isopropylmalate, via the formation of 2-isopropylmaleate. The protein is 3-isopropylmalate dehydratase small subunit of Afipia carboxidovorans (strain ATCC 49405 / DSM 1227 / KCTC 32145 / OM5) (Oligotropha carboxidovorans).